The sequence spans 187 residues: Elongation factor P (187 aa).

This sequence belongs to the elongation factor P family.

It localises to the cytoplasm. Its pathway is protein biosynthesis; polypeptide chain elongation. Its function is as follows. Involved in peptide bond synthesis. Stimulates efficient translation and peptide-bond synthesis on native or reconstituted 70S ribosomes in vitro. Probably functions indirectly by altering the affinity of the ribosome for aminoacyl-tRNA, thus increasing their reactivity as acceptors for peptidyl transferase. The chain is Elongation factor P from Fusobacterium nucleatum subsp. nucleatum (strain ATCC 25586 / DSM 15643 / BCRC 10681 / CIP 101130 / JCM 8532 / KCTC 2640 / LMG 13131 / VPI 4355).